The chain runs to 274 residues: NAD-dependent protein deacetylase (274 aa).

Residues 1-274 (MDSRMSDLQA…CDEVLAEVVP (274 aa)) enclose the Deacetylase sirtuin-type domain. NAD(+) contacts are provided by residues 26–46 (GAGC…GQWK) and 104–107 (QNVD). Catalysis depends on histidine 122, which acts as the Proton acceptor. Residues cysteine 130, cysteine 133, cysteine 181, and cysteine 184 each coordinate Zn(2+). Residues 221-223 (GSS), 247-249 (NLG), and cysteine 265 contribute to the NAD(+) site.

Belongs to the sirtuin family. Class II subfamily. It depends on Zn(2+) as a cofactor.

The protein localises to the cytoplasm. It catalyses the reaction N(6)-acetyl-L-lysyl-[protein] + NAD(+) + H2O = 2''-O-acetyl-ADP-D-ribose + nicotinamide + L-lysyl-[protein]. Functionally, NAD-dependent protein deacetylase which modulates the activities of several enzymes which are inactive in their acetylated form. This is NAD-dependent protein deacetylase from Bordetella pertussis (strain Tohama I / ATCC BAA-589 / NCTC 13251).